A 488-amino-acid polypeptide reads, in one-letter code: Probable malate:quinone oxidoreductase (488 aa).

This sequence belongs to the MQO family. Requires FAD as cofactor.

It carries out the reaction (S)-malate + a quinone = a quinol + oxaloacetate. It functions in the pathway carbohydrate metabolism; tricarboxylic acid cycle; oxaloacetate from (S)-malate (quinone route): step 1/1. This chain is Probable malate:quinone oxidoreductase, found in Neisseria meningitidis serogroup C (strain 053442).